Consider the following 356-residue polypeptide: GTPase Obg (356 aa).

Residues 1–159 (MKFLDEAKVY…RWIWLRMKLI (159 aa)) form the Obg domain. An OBG-type G domain is found at 160–327 (ADAGLVGLPN…VLRALTDVIS (168 aa)). Residues 166 to 173 (GLPNAGKS), 191 to 195 (FTTLH), 212 to 215 (DIPG), 279 to 282 (NKID), and 308 to 310 (SGV) each bind GTP. Residues Ser173 and Thr193 each coordinate Mg(2+). The disordered stretch occupies residues 329–356 (APVSTKAKGEPTENETPPPSTGWSPLSN).

The protein belongs to the TRAFAC class OBG-HflX-like GTPase superfamily. OBG GTPase family. In terms of assembly, monomer. It depends on Mg(2+) as a cofactor.

It is found in the cytoplasm. Its function is as follows. An essential GTPase which binds GTP, GDP and possibly (p)ppGpp with moderate affinity, with high nucleotide exchange rates and a fairly low GTP hydrolysis rate. Plays a role in control of the cell cycle, stress response, ribosome biogenesis and in those bacteria that undergo differentiation, in morphogenesis control. This is GTPase Obg from Afipia carboxidovorans (strain ATCC 49405 / DSM 1227 / KCTC 32145 / OM5) (Oligotropha carboxidovorans).